The following is a 434-amino-acid chain: Glutamate-1-semialdehyde 2,1-aminomutase (434 aa).

Lysine 270 is modified (N6-(pyridoxal phosphate)lysine).

It belongs to the class-III pyridoxal-phosphate-dependent aminotransferase family. HemL subfamily. As to quaternary structure, homodimer. Pyridoxal 5'-phosphate is required as a cofactor.

It localises to the cytoplasm. It catalyses the reaction (S)-4-amino-5-oxopentanoate = 5-aminolevulinate. It functions in the pathway porphyrin-containing compound metabolism; protoporphyrin-IX biosynthesis; 5-aminolevulinate from L-glutamyl-tRNA(Glu): step 2/2. The protein is Glutamate-1-semialdehyde 2,1-aminomutase of Pelotomaculum thermopropionicum (strain DSM 13744 / JCM 10971 / SI).